The primary structure comprises 183 residues: Capsid protein (183 aa).

Residues 143–183 (LPETTVVRRRGRSPRRRTPSPRRRRSKSPRRRRSQSRESQC) form a disordered region. Basic residues predominate over residues 149 to 176 (VRRRGRSPRRRTPSPRRRRSKSPRRRRS). A phosphoserine; by host mark is found at S155, S162, and S170. A 1; half-length repeat occupies 155–160 (SPRRRT). Residues 155–176 (SPRRRTPSPRRRRSKSPRRRRS) form a 3 X 7 AA repeats of S-P-R-R-R-[PR]-S region. The short motif at 158 to 175 (RRTPSPRRRRSKSPRRRR) is the Bipartite nuclear localization signal element. 2 repeat units span residues 162 to 168 (SPRRRRS) and 170 to 176 (SPRRRRS). Residues 177–183 (QSRESQC) are RNA binding.

This sequence belongs to the orthohepadnavirus core antigen family. As to quaternary structure, homodimerizes, then multimerizes. Interacts with cytosol exposed regions of viral L glycoprotein present in the reticulum-to-Golgi compartment. Interacts with human FLNB. Phosphorylated form interacts with host importin alpha; this interaction depends on the exposure of the NLS, which itself depends upon genome maturation and/or phosphorylation of the capsid protein. Interacts with host NUP153. In terms of processing, phosphorylated by host SRPK1, SRPK2, and maybe protein kinase C or GAPDH. Phosphorylation is critical for pregenomic RNA packaging. Protein kinase C phosphorylation is stimulated by HBx protein and may play a role in transport of the viral genome to the nucleus at the late step during the viral replication cycle.

It localises to the virion. The protein localises to the host cytoplasm. Self assembles to form an icosahedral capsid. Most capsids appear to be large particles with an icosahedral symmetry of T=4 and consist of 240 copies of capsid protein, though a fraction forms smaller T=3 particles consisting of 180 capsid proteins. Entering capsids are transported along microtubules to the nucleus. Phosphorylation of the capsid is thought to induce exposure of nuclear localization signal in the C-terminal portion of the capsid protein that allows binding to the nuclear pore complex via the importin (karyopherin-) alpha and beta. Capsids are imported in intact form through the nuclear pore into the nuclear basket, where it probably binds NUP153. Only capsids that contain the mature viral genome can release the viral DNA and capsid protein into the nucleoplasm. Immature capsids get stuck in the basket. Capsids encapsulate the pre-genomic RNA and the P protein. Pre-genomic RNA is reverse-transcribed into DNA while the capsid is still in the cytoplasm. The capsid can then either be directed to the nucleus, providing more genomes for transcription, or bud through the endoplasmic reticulum to provide new virions. This Homo sapiens (Human) protein is Capsid protein.